Reading from the N-terminus, the 495-residue chain is Cytochrome P450 2E1 (495 aa).

298 to 303 (FAGTET) is a substrate binding site. Cys-437 is a heme binding site.

This sequence belongs to the cytochrome P450 family. In terms of assembly, interacts with chaperones HSP70 and HSP90; this interaction is required for initial targeting to mitochondria. Heme serves as cofactor.

It is found in the endoplasmic reticulum membrane. Its subcellular location is the microsome membrane. The protein resides in the mitochondrion inner membrane. It carries out the reaction an organic molecule + reduced [NADPH--hemoprotein reductase] + O2 = an alcohol + oxidized [NADPH--hemoprotein reductase] + H2O + H(+). It catalyses the reaction (5Z,8Z,11Z)-eicosatrienoate + reduced [NADPH--hemoprotein reductase] + O2 = 19-hydroxy-(5Z,8Z,11Z)-eicosatrienoate + oxidized [NADPH--hemoprotein reductase] + H2O + H(+). The enzyme catalyses (5Z,8Z,11Z,14Z,17Z)-eicosapentaenoate + reduced [NADPH--hemoprotein reductase] + O2 = 19-hydroxy-(5Z,8Z,11Z,14Z,17Z)-eicosapentaenoate + oxidized [NADPH--hemoprotein reductase] + H2O + H(+). The catalysed reaction is (4Z,7Z,10Z,13Z,16Z,19Z)-docosahexaenoate + reduced [NADPH--hemoprotein reductase] + O2 = 21-hydroxy-(4Z,7Z,10Z,13Z,16Z,19Z)-docosahexaenoate + oxidized [NADPH--hemoprotein reductase] + H2O + H(+). It carries out the reaction dodecanoate + reduced [NADPH--hemoprotein reductase] + O2 = 11-hydroxydodecanoate + oxidized [NADPH--hemoprotein reductase] + H2O + H(+). It catalyses the reaction tetradecanoate + reduced [NADPH--hemoprotein reductase] + O2 = 13-hydroxytetradecanoate + oxidized [NADPH--hemoprotein reductase] + H2O + H(+). The enzyme catalyses 4-nitrophenol + NADPH + O2 + H(+) = 4-nitrocatechol + NADP(+) + H2O. The protein operates within lipid metabolism; fatty acid metabolism. The omega-1 hydroxylase activity is stimulated by cytochrome b5. Its function is as follows. A cytochrome P450 monooxygenase involved in the metabolism of fatty acids. Mechanistically, uses molecular oxygen inserting one oxygen atom into a substrate, and reducing the second into a water molecule, with two electrons provided by NADPH via cytochrome P450 reductase (NADPH--hemoprotein reductase). Catalyzes the hydroxylation of carbon-hydrogen bonds. Hydroxylates fatty acids specifically at the omega-1 position displaying the highest catalytic activity for saturated fatty acids. May be involved in the oxidative metabolism of xenobiotics. The protein is Cytochrome P450 2E1 (CYP2E1) of Sus scrofa (Pig).